Here is a 426-residue protein sequence, read N- to C-terminus: MKIEKIVAREILDSRGNPTVEVDVVLESGIMGRASVPSGASTGEHEALELRDGDKQRYGGKGVQKAVDNVNKIIAPKLIGMSSLNQRGIDYAMLALDGTKTKSNLGANAILGVSLAVAKAAASYLDLPLYRYIGGTNTYVMPVPMMNIINGGSHSDAPIAFQEFMIRPVGAPSFREGLRMGAEVFHALKKVLKDRGLSTAVGDEGGFAPNLEGTEDALNSIIAAIKAAGYEPGKDVMIGMDCASSEFYHDGIYDYTKFEGAKGKKRTAEEQIDYLEELINKFPIDSIEDGMSENDWEGWKKLTERIGDRCQLVGDDLFVTNVDFLAMGIEKGCANSILIKVNQIGSLTETLNAIEMAHRHGYTTVTSHRSGETEDATIADIAVATNSGQIKTGSLSRSDRMAKYNQLLRIEEELGDLAVYGYKRIK.

(2R)-2-phosphoglycerate is bound at residue Gln162. Glu204 serves as the catalytic Proton donor. Mg(2+) contacts are provided by Asp241, Glu288, and Asp315. Residues Lys340, Arg369, Ser370, and Lys391 each coordinate (2R)-2-phosphoglycerate. Lys340 acts as the Proton acceptor in catalysis.

This sequence belongs to the enolase family. The cofactor is Mg(2+).

It is found in the cytoplasm. The protein localises to the secreted. Its subcellular location is the cell surface. The catalysed reaction is (2R)-2-phosphoglycerate = phosphoenolpyruvate + H2O. It participates in carbohydrate degradation; glycolysis; pyruvate from D-glyceraldehyde 3-phosphate: step 4/5. Functionally, catalyzes the reversible conversion of 2-phosphoglycerate (2-PG) into phosphoenolpyruvate (PEP). It is essential for the degradation of carbohydrates via glycolysis. This chain is Enolase, found in Bacteroides thetaiotaomicron (strain ATCC 29148 / DSM 2079 / JCM 5827 / CCUG 10774 / NCTC 10582 / VPI-5482 / E50).